Consider the following 459-residue polypeptide: uncharacterized protein (459 aa).

One can recognise a TRAM domain in the interval 7–65; that stretch reads PVNKNEIYTLTFEDLTHEGNGVAKIEGYPLFVPEVLPDEQAKVKVVKVNKNFGFGKLLE. Positions 78, 82, 85, and 164 each coordinate [4Fe-4S] cluster. Gln-288, Tyr-317, Glu-338, and Asp-386 together coordinate S-adenosyl-L-methionine. The active-site Nucleophile is Cys-413.

Belongs to the class I-like SAM-binding methyltransferase superfamily. RNA M5U methyltransferase family.

This is an uncharacterized protein from Oceanobacillus iheyensis (strain DSM 14371 / CIP 107618 / JCM 11309 / KCTC 3954 / HTE831).